Consider the following 156-residue polypeptide: ATP synthase subunit b (156 aa).

A helical transmembrane segment spans residues V5–V25.

It belongs to the ATPase B chain family. As to quaternary structure, F-type ATPases have 2 components, F(1) - the catalytic core - and F(0) - the membrane proton channel. F(1) has five subunits: alpha(3), beta(3), gamma(1), delta(1), epsilon(1). F(0) has three main subunits: a(1), b(2) and c(10-14). The alpha and beta chains form an alternating ring which encloses part of the gamma chain. F(1) is attached to F(0) by a central stalk formed by the gamma and epsilon chains, while a peripheral stalk is formed by the delta and b chains.

The protein localises to the cell inner membrane. F(1)F(0) ATP synthase produces ATP from ADP in the presence of a proton or sodium gradient. F-type ATPases consist of two structural domains, F(1) containing the extramembraneous catalytic core and F(0) containing the membrane proton channel, linked together by a central stalk and a peripheral stalk. During catalysis, ATP synthesis in the catalytic domain of F(1) is coupled via a rotary mechanism of the central stalk subunits to proton translocation. Functionally, component of the F(0) channel, it forms part of the peripheral stalk, linking F(1) to F(0). In Shewanella loihica (strain ATCC BAA-1088 / PV-4), this protein is ATP synthase subunit b.